Consider the following 195-residue polypeptide: PRS fimbrial minor pilin protein (195 aa).

The first 22 residues, 1–22 (MRLRFSVPLFFFGCVFVHGVFA), serve as a signal peptide directing secretion. A disulfide bridge links cysteine 58 with cysteine 97.

Belongs to the fimbrial protein family.

It localises to the secreted. The protein localises to the fimbrium. Its function is as follows. Fimbriae (also called pili), polar filaments radiating from the surface of the bacterium to a length of 0.5-1.5 micrometers and numbering 100-300 per cell, enable bacteria to colonize the epithelium of specific host organs. Functionally, seems to anchor the pilus to the bacterial cell. In addition the stoichiometric relationship between PrsH and PrsA determines the pilus length. This is PRS fimbrial minor pilin protein (prsH) from Escherichia coli.